Here is a 487-residue protein sequence, read N- to C-terminus: Protein translocase subunit SecY (487 aa).

Residues 1–20 (MSWKDTAEPLLVRMPAVQRP) lie on the Cytoplasmic side of the membrane. A helical membrane pass occupies residues 21–47 (EGHVPFKRKLTWTGGVLLLYFFLTNVK). The Extracellular segment spans residues 48–59 (LFGLDIDASQQV). The segment at residues 60-67 (FGRFSSIL) is an intramembrane region (helical). The chain crosses the membrane as a discontinuously helical span at residues 60 to 88 (FGRFSSILASGQGSIMQLGIGPIVTASIV). Residues 68 to 79 (ASGQGSIMQLGI) lie within the membrane without spanning it. Residues 80-88 (GPIVTASIV) constitute an intramembrane region (helical). Topologically, residues 89 to 110 (LQLLGGADLLGLNTQDDPRDQI) are cytoplasmic. Residues 111–135 (LYQGLQKLLVLVMICLTGLPMVFAG) traverse the membrane as a helical segment. The Extracellular segment spans residues 136–153 (GFLPADTAVANSLGIGTA). Residues 154–178 (GVQWLIFAQMFVGGVLILFMDEVIS) form a helical membrane-spanning segment. The Cytoplasmic portion of the chain corresponds to 179–184 (KWGVGS). A helical transmembrane segment spans residues 185-203 (GIGLFIVAGVSQRLVGGLL). At 204–244 (TAPFLGNSEGIIYTWYLFITGERGTGPVLAADGLQTVLLQG) the chain is on the extracellular side. Residues 245–266 (ELLGLFTTVLIFAVVVYAESVR) traverse the membrane as a helical segment. Over 267–291 (VEIPLSNARVKGARGRFPVKLIYAS) the chain is Cytoplasmic. A helical transmembrane segment spans residues 292-313 (VLPMILVRALQANIQFLGRILN). The Extracellular segment spans residues 314 to 364 (AQLGSMPAFLGTYANGQPTGGLFYFLAPIQSRGDWMWWLEGTAQPVWQILT). Residues 365–384 (RVGIDLFVMLVGGAVFAVFW) form a helical membrane-spanning segment. The Cytoplasmic segment spans residues 385-427 (VETTDMGPEATAKQIHNSGMQIPGFRQNVGVIEKVLERYIPQV). A helical transmembrane segment spans residues 428–446 (TVIGGALVGLLAVMANMLG). The Extracellular segment spans residues 447 to 451 (TIGGV). Residues 452-466 (SGTGLLLTVSITYKL) traverse the membrane as a helical segment. Topologically, residues 467 to 487 (YEEIAEEQLMEMHPMMRQMFG) are cytoplasmic.

The protein belongs to the SecY/SEC61-alpha family. As to quaternary structure, component of the Sec protein translocase complex. Heterotrimer consisting of alpha (SecY), beta (SecG) and gamma (SecE) subunits. The heterotrimers can form oligomers, although 1 heterotrimer is thought to be able to translocate proteins. Interacts with the ribosome. May interact with SecDF, and other proteins may be involved.

The protein resides in the cell membrane. Its function is as follows. The central subunit of the protein translocation channel SecYEG. Consists of two halves formed by TMs 1-5 and 6-10. These two domains form a lateral gate at the front which open onto the bilayer between TMs 2 and 7, and are clamped together by SecE at the back. The channel is closed by both a pore ring composed of hydrophobic SecY resides and a short helix (helix 2A) on the extracellular side of the membrane which forms a plug. The plug probably moves laterally to allow the channel to open. The ring and the pore may move independently. The chain is Protein translocase subunit SecY from Haloarcula marismortui (strain ATCC 43049 / DSM 3752 / JCM 8966 / VKM B-1809) (Halobacterium marismortui).